A 143-amino-acid polypeptide reads, in one-letter code: Nucleoside diphosphate kinase (143 aa).

ATP-binding residues include lysine 11, phenylalanine 59, arginine 87, threonine 93, arginine 104, and asparagine 114. The Pros-phosphohistidine intermediate role is filled by histidine 117.

The protein belongs to the NDK family. Homotetramer. It depends on Mg(2+) as a cofactor.

The protein localises to the cytoplasm. It catalyses the reaction a 2'-deoxyribonucleoside 5'-diphosphate + ATP = a 2'-deoxyribonucleoside 5'-triphosphate + ADP. The enzyme catalyses a ribonucleoside 5'-diphosphate + ATP = a ribonucleoside 5'-triphosphate + ADP. Functionally, major role in the synthesis of nucleoside triphosphates other than ATP. The ATP gamma phosphate is transferred to the NDP beta phosphate via a ping-pong mechanism, using a phosphorylated active-site intermediate. The protein is Nucleoside diphosphate kinase of Pseudoalteromonas translucida (strain TAC 125).